Here is a 189-residue protein sequence, read N- to C-terminus: Transcriptional repressor NrdR (189 aa).

The segment at cysteine 3–cysteine 34 is a zinc-finger region. The ATP-cone domain maps to leucine 46–aspartate 136. Residues arginine 152–glutamate 189 form a disordered region. The span at glutamate 180 to glutamate 189 shows a compositional bias: basic and acidic residues.

This sequence belongs to the NrdR family. Requires Zn(2+) as cofactor.

Functionally, negatively regulates transcription of bacterial ribonucleotide reductase nrd genes and operons by binding to NrdR-boxes. This Saccharopolyspora erythraea (strain ATCC 11635 / DSM 40517 / JCM 4748 / NBRC 13426 / NCIMB 8594 / NRRL 2338) protein is Transcriptional repressor NrdR.